The chain runs to 434 residues: Histidinol dehydrogenase (434 aa).

Residues Tyr-130, Gln-191, and Asn-214 each contribute to the NAD(+) site. Substrate contacts are provided by Ser-237, Gln-259, and His-262. Zn(2+) contacts are provided by Gln-259 and His-262. Catalysis depends on proton acceptor residues Glu-328 and His-329. Residues His-329, Asp-362, Glu-416, and His-421 each coordinate substrate. Residue Asp-362 participates in Zn(2+) binding. His-421 lines the Zn(2+) pocket.

Belongs to the histidinol dehydrogenase family. Zn(2+) serves as cofactor.

The catalysed reaction is L-histidinol + 2 NAD(+) + H2O = L-histidine + 2 NADH + 3 H(+). The protein operates within amino-acid biosynthesis; L-histidine biosynthesis; L-histidine from 5-phospho-alpha-D-ribose 1-diphosphate: step 9/9. Catalyzes the sequential NAD-dependent oxidations of L-histidinol to L-histidinaldehyde and then to L-histidine. The sequence is that of Histidinol dehydrogenase from Rhodospirillum rubrum (strain ATCC 11170 / ATH 1.1.1 / DSM 467 / LMG 4362 / NCIMB 8255 / S1).